Reading from the N-terminus, the 274-residue chain is Large ribosomal subunit protein uL2 (274 aa).

The interval 223-265 is disordered; sequence VVMNPVDHPHGGGEGRTSGGRHPVSPWGVPTKGYKTRSNKRTD.

This sequence belongs to the universal ribosomal protein uL2 family. In terms of assembly, part of the 50S ribosomal subunit. Forms a bridge to the 30S subunit in the 70S ribosome.

Functionally, one of the primary rRNA binding proteins. Required for association of the 30S and 50S subunits to form the 70S ribosome, for tRNA binding and peptide bond formation. It has been suggested to have peptidyltransferase activity; this is somewhat controversial. Makes several contacts with the 16S rRNA in the 70S ribosome. The chain is Large ribosomal subunit protein uL2 from Vibrio vulnificus (strain CMCP6).